The sequence spans 377 residues: Transcription initiation factor IIA subunit 1 (377 aa).

Residue Ala-2 is modified to N-acetylalanine. 3 stretches are compositionally biased toward low complexity: residues 69–79, 89–105, and 248–280; these read QVQQQHQPQQQ, QAQP…TQQV, and QAQI…TGDT. Disordered stretches follow at residues 69–107 and 248–330; these read QVQQ…QVLI and QAQI…QELF. 2 positions are modified to phosphoserine; by TAF1: Ser-281 and Ser-282. Over residues 281–330 the composition is skewed to acidic residues; sequence SSEEDEDEEEDYDDDEEEDKEKDGAEDGQVEEEPLNSEDDVSDEEGQELF. Phosphoserine occurs at positions 317 and 322. Residues His-344 and Arg-345 each contribute to the DNA site.

This sequence belongs to the TFIIA subunit 1 family. TFIIA is a heterodimer of the large unprocessed subunit 1 and a small subunit gamma. It was originally believed to be a heterotrimer of an alpha (p35), a beta (p19) and a gamma subunit (p12). TFIIA forms a complex with TBP. Part of TBP-based Pol II pre-initiation complex (PIC), in which Pol II core assembles with general transcription factors and other specific initiation factors including GTF2E1, GTF2E2, GTF2F1, GTF2F2, TCEA1, ERCC2, ERCC3, GTF2H2, GTF2H3, GTF2H4, GTF2H5, GTF2A1, GTF2A2, GTF2B and TBP; this large multi-subunit PIC complex mediates DNA unwinding and targets Pol II core to the transcription start site where the first phosphodiester bond forms. The alpha and beta subunits are postranslationally produced from the precursor formby TASP1. The cleavage promotes proteasomal degradation.

It localises to the nucleus. TFIIA is a component of the transcription machinery of RNA polymerase II and plays an important role in transcriptional activation. TFIIA in a complex with TBP mediates transcriptional activity. This chain is Transcription initiation factor IIA subunit 1 (Gtf2a1), found in Rattus norvegicus (Rat).